The sequence spans 671 residues: Preterminal protein (671 aa).

The Nuclear localization signal motif lies at 380 to 389 (RLPVRRRRRR). The interval 386–409 (RRRRVPPPPPPPEEEEEGEALMEE) is disordered. A compositionally biased stretch (acidic residues) spans 397–409 (PEEEEEGEALMEE). S580 carries the post-translational modification O-(5'-phospho-DNA)-serine. The segment at 645-671 (GADVPLPPLPAGPEPPLPPGARPRHRF) is disordered. The span at 649 to 665 (PLPPLPAGPEPPLPPGA) shows a compositional bias: pro residues.

Belongs to the adenoviridae terminal protein family. In terms of assembly, heterodimer with the polymerase; this heterodimer binds to bp 9 to 18 of the genome. Interacts with host POU2F1; POU2F1 binds to the auxiliary sequences in the inverted terminal repeats and tethers the pTP-POL heterodimer to the origin DNA thereby participating in the assembly of the pre-initiation complex (POL-TP-DBP-NFIA-POU2F1). Post-translationally, preterminal protein is used to replicate viral genome, upon genomic encapsidation it is processed first into iTP and finally into TP by adenovirus protease.

The protein resides in the host nucleus matrix. In terms of biological role, protein covalently bound to the viral DNA that acts as a primer for viral genomic replication by DNA strand displacement. Assembles on the viral origin of replication in an initiation complex with viral polymerase, DBP, host NFIA and host POU2F1/OCT1. During initiation, the polymerase covalently couples the first dCTP with Ser-580 of pTP. The terminal protein stimulates the template activity over 20 fold compared to protein-free templates. Neo-synthesized viral genomes are linked to two preterminal proteins, one for each 5' end. These new genomes are encapsidated in the nucleus, and during capsid maturation by viral protease, preterminal protein is first cleaved into intermediary (iTP), then into mature TP. May play a role in host nuclear matrix localization of genomic DNA. This is Preterminal protein from Homo sapiens (Human).